The sequence spans 303 residues: UDP-3-O-acyl-N-acetylglucosamine deacetylase (303 aa).

The Zn(2+) site is built by H78, H237, and D241. Catalysis depends on H264, which acts as the Proton donor.

This sequence belongs to the LpxC family. Requires Zn(2+) as cofactor.

It carries out the reaction a UDP-3-O-[(3R)-3-hydroxyacyl]-N-acetyl-alpha-D-glucosamine + H2O = a UDP-3-O-[(3R)-3-hydroxyacyl]-alpha-D-glucosamine + acetate. The protein operates within glycolipid biosynthesis; lipid IV(A) biosynthesis; lipid IV(A) from (3R)-3-hydroxytetradecanoyl-[acyl-carrier-protein] and UDP-N-acetyl-alpha-D-glucosamine: step 2/6. In terms of biological role, catalyzes the hydrolysis of UDP-3-O-myristoyl-N-acetylglucosamine to form UDP-3-O-myristoylglucosamine and acetate, the committed step in lipid A biosynthesis. The polypeptide is UDP-3-O-acyl-N-acetylglucosamine deacetylase (Coxiella burnetii (strain CbuG_Q212) (Coxiella burnetii (strain Q212))).